Consider the following 568-residue polypeptide: Urease subunit alpha (568 aa).

Residues 130 to 568 form the Urease domain; that stretch reads GGIDTHIHFI…LPMAQRYFLF (439 aa). Residues His135, His137, and Lys218 each contribute to the Ni(2+) site. N6-carboxylysine is present on Lys218. His220 is a binding site for substrate. Positions 247 and 273 each coordinate Ni(2+). Residue His321 is the Proton donor of the active site. Asp361 is a Ni(2+) binding site.

Belongs to the metallo-dependent hydrolases superfamily. Urease alpha subunit family. In terms of assembly, heterotrimer of UreA (gamma), UreB (beta) and UreC (alpha) subunits. Three heterotrimers associate to form the active enzyme. The cofactor is Ni cation. In terms of processing, carboxylation allows a single lysine to coordinate two nickel ions.

The protein resides in the cytoplasm. The catalysed reaction is urea + 2 H2O + H(+) = hydrogencarbonate + 2 NH4(+). Its pathway is nitrogen metabolism; urea degradation; CO(2) and NH(3) from urea (urease route): step 1/1. The chain is Urease subunit alpha from Burkholderia ambifaria (strain ATCC BAA-244 / DSM 16087 / CCUG 44356 / LMG 19182 / AMMD) (Burkholderia cepacia (strain AMMD)).